A 183-amino-acid chain; its full sequence is MTTGLPSQRQVIELLGADFACAGYEIEDVVIDARARPPRIAVIADGDAPLDLDTIAALSRRASALLDGLDGANKIRGRYLLEVSSPGVERPLTSEKHFRRARGRKVELVLSDGSRLTGRVGEMRAGTVALVIREDRGWAVREIPLAEIVKAVVQVEFSPPAPAELELAQSSEMGLARGTEAGA.

It belongs to the RimP family.

The protein resides in the cytoplasm. Functionally, required for maturation of 30S ribosomal subunits. In Mycobacterium bovis (strain ATCC BAA-935 / AF2122/97), this protein is Ribosome maturation factor RimP.